A 196-amino-acid polypeptide reads, in one-letter code: Calcium channel flower (196 aa).

3 helical membrane passes run 35-55 (LGIVAAFFAILFGLWNVLSII), 70-92 (LAGFVVMALEAPCCFVCIEQVGS), and 113-133 (AVPPIFMCFGLASLFGSGLIF).

The protein belongs to the calcium channel flower family. As to quaternary structure, homomultimer. Associates with the dally/ magu complex.

It is found in the cell membrane. Its subcellular location is the cytoplasmic vesicle. The protein localises to the secretory vesicle. The protein resides in the synaptic vesicle membrane. It localises to the presynaptic cell membrane. It is found in the endosome. With respect to regulation, channel activity is inhibited by La(3+), which reduces Ca(2+) influx and thus inhibits it's function in promoting activity-dependent bulk endocytosis (ADBE) in response to high stimuli. Transmembrane protein which mediates synaptic endocytosis, fitness-based cell culling, neuronal culling, morphogen gradient scaling, and calcium transport. Regulates synaptic endocytosis and hence couples exo- with endocytosis. Controls two major modes of synaptic vesicle (SV) endocytosis in the synaptic boutons of neuromuscular junctions (NMJs); Ca(2+) channel-independent Clathrin-mediated endocytosis (CME) in response to mild stimulation, and Ca(2+) channel-dependent activity-dependent bulk endocytosis (ADBE) in response to strong stimulation. Functions in ADBE and subsequent SV reformation from bulk endosomes by initiating Ca(2+) channel-dependent phosphatidylinositol 4,5-bisphosphate (PtdIns(4,5)P2) compartmentalization in synaptic boutons. There it acts at the periactive zone to provide the low Ca(2+) levels required to initiate Calcineurin activation and upregulate PtdIns(4,5)P2. Conversely PtdIns(4,5)P2 enhances fwe Ca(2+) channel-activity, establishing a positive feedback loop that induces PtdIns(4,5)P2 microdomain at the periactive zone. These microdomains trigger bulk membrane invagination (i.e. ADBE) by triggering actin polymerization while also promoting localization of fwe to bulk endosomes, thereby removing the ADBE trigger to reduce endocytosis and prevent excess membrane uptake. PtdIns(4,5)P2 then promotes SV reformation from the bulk endosomes, to coordinate ADBE and subsequent SV reformation. Different combinations of the flower isoforms at the cell membrane are also required for the identification and elimination of suboptimal or supernumerary cells during development, regeneration, and adulthood. Required for the recognition and elimination of unfit cells in the developing wing during cell competition. In the developing pupal retina, mediates the elimination of unwanted postmitotic neurons, including supernumerary photoreceptor neurons that form at the periphery of the retina and are contained within incomplete ommatidia units. Also required for efficient elimination and replacement of old neurons by newly generated neurons during regeneration in the adult brain following mechanical injury. Downstream of the flower fitness fingerprints, cells identified as unwanted or unfit are eliminated via apoptosis through the expression of ahuizotl (azot). However, the cells marked for elimination by the flower isoforms only undergo apoptosis if additional thresholds are met; (1) their neighboring fit/healthy cells express different levels of the fwe isoforms, and (2) the levels of the protective signal SPARC expressed by the loser or unwanted cells are unable to inhibit caspase activation. These additional thresholds for flower-mediated apoptosis, allows useful cells to recover from transient and limited stress before they are unnecessarily eliminated. Functions with dally and magu in a mechanism of scaling, which utilises apoptosis to ensure that the dpp morphogen gradient, which mediates organ growth, remains proportional to the size of the growing wing. In this mechanism, fwe represses dally- and Magu-dependent activity in expanding the gradient, and dally/Magu inhibits fwe-dependent apoptosis to keep cell death rate low. When the levels of these different proteins are optimally regulated the gradient correctly scales with organ growth but when this fails, fwe-mediated apoptosis is activated to trim the developing tissue to match the correct size of the gradient. This chain is Calcium channel flower, found in Drosophila grimshawi (Hawaiian fruit fly).